The sequence spans 184 residues: Alpha-tubulin N-acetyltransferase (184 aa).

Positions 1-174 constitute an N-acetyltransferase domain; that stretch reads MNIPPEKMHN…NNFVIFAEYF (174 aa). Acetyl-CoA is bound by residues 108-121 and 144-153; these read FYIQ…GLGL and SYKLQSFLKK.

It belongs to the acetyltransferase ATAT1 family.

It carries out the reaction L-lysyl-[alpha-tubulin] + acetyl-CoA = N(6)-acetyl-L-lysyl-[alpha-tubulin] + CoA + H(+). Specifically acetylates 'Lys-40' in alpha-tubulin on the lumenal side of microtubules. Promotes microtubule destabilization and accelerates microtubule dynamics; this activity may be independent of acetylation activity. Acetylates alpha-tubulin with a slow enzymatic rate, due to a catalytic site that is not optimized for acetyl transfer. Enters the microtubule through each end and diffuses quickly throughout the lumen of microtubules. Acetylates only long/old microtubules because of its slow acetylation rate since it does not have time to act on dynamically unstable microtubules before the enzyme is released. This Plasmodium knowlesi (strain H) protein is Alpha-tubulin N-acetyltransferase.